A 315-amino-acid polypeptide reads, in one-letter code: MEIVSTGNETITEFVLLGFYDIPELHFLFFIVFTAVYVFIIIGNMLIIVAVVSSQRLHKPMYIFLANLSFLDILYTSAVMPKMLEGFLQEATISVAGCLLQFFIFGSLATAECLLLAVMAYDRYLAICYPLHYPLLMGPRRYMGLVVTTWLSGFVVDGLVVALVAQLRFCGPNHIDQFYCDFMLFVGLACSDPRVAQVTTLILSVFCLTIPFGLILTSYARIVVAVLRVPAGASRRRAFSTCSSHLAVVTTFYGTLMIFYVAPSAVHSQLLSKVFSLLYTVVTPLFNPVIYTMRNKEVHQALRKILCIKQTETLD.

Residues 1–27 (MEIVSTGNETITEFVLLGFYDIPELHF) are Extracellular-facing. Asn-8 carries an N-linked (GlcNAc...) asparagine glycan. A helical membrane pass occupies residues 28 to 48 (LFFIVFTAVYVFIIIGNMLII). At 49-56 (VAVVSSQR) the chain is on the cytoplasmic side. A helical transmembrane segment spans residues 57–77 (LHKPMYIFLANLSFLDILYTS). At 78–100 (AVMPKMLEGFLQEATISVAGCLL) the chain is on the extracellular side. Cys-98 and Cys-190 form a disulfide bridge. Residues 101–121 (QFFIFGSLATAECLLLAVMAY) traverse the membrane as a helical segment. Over 122–140 (DRYLAICYPLHYPLLMGPR) the chain is Cytoplasmic. The chain crosses the membrane as a helical span at residues 141–161 (RYMGLVVTTWLSGFVVDGLVV). The Extracellular segment spans residues 162–198 (ALVAQLRFCGPNHIDQFYCDFMLFVGLACSDPRVAQV). A helical transmembrane segment spans residues 199-218 (TTLILSVFCLTIPFGLILTS). The Cytoplasmic segment spans residues 219 to 238 (YARIVVAVLRVPAGASRRRA). The helical transmembrane segment at 239–259 (FSTCSSHLAVVTTFYGTLMIF) threads the bilayer. Residues 260 to 272 (YVAPSAVHSQLLS) are Extracellular-facing. A helical membrane pass occupies residues 273–293 (KVFSLLYTVVTPLFNPVIYTM). Over 294–315 (RNKEVHQALRKILCIKQTETLD) the chain is Cytoplasmic.

It belongs to the G-protein coupled receptor 1 family.

The protein resides in the cell membrane. Functionally, odorant receptor. The polypeptide is Olfactory receptor 11A1 (OR11A1) (Homo sapiens (Human)).